Here is a 92-residue protein sequence, read N- to C-terminus: Large ribosomal subunit protein bL28 (92 aa).

Belongs to the bacterial ribosomal protein bL28 family.

The protein is Large ribosomal subunit protein bL28 of Borrelia garinii subsp. bavariensis (strain ATCC BAA-2496 / DSM 23469 / PBi) (Borreliella bavariensis).